Consider the following 527-residue polypeptide: Probable feruloyl esterase B (527 aa).

The N-terminal stretch at 1-19 (MALLRHLLPVLTVGSAVQS) is a signal peptide. 2 cysteine pairs are disulfide-bonded: C31–C76 and C65–C115. N-linked (GlcNAc...) asparagine glycosylation is found at N56, N86, and N139. 4 cysteine pairs are disulfide-bonded: C188/C442, C257/C274, C283/C292, and C504/C526. S189 serves as the catalytic Acyl-ester intermediate. Residues D258, D261, A263, D265, and I267 each contribute to the Ca(2+) site. N277 carries an N-linked (GlcNAc...) asparagine glycan. N312 and N356 each carry an N-linked (GlcNAc...) asparagine glycan. Active-site charge relay system residues include D401 and H441.

This sequence belongs to the tannase family.

The protein resides in the secreted. The catalysed reaction is feruloyl-polysaccharide + H2O = ferulate + polysaccharide.. Its function is as follows. Involved in degradation of plant cell walls. Hydrolyzes the feruloyl-arabinose ester bond in arabinoxylans as well as the feruloyl-galactose and feruloyl-arabinose ester bonds in pectin. This is Probable feruloyl esterase B (faeB) from Emericella nidulans (strain FGSC A4 / ATCC 38163 / CBS 112.46 / NRRL 194 / M139) (Aspergillus nidulans).